The chain runs to 118 residues: Small ribosomal subunit protein eS24 (118 aa).

Belongs to the eukaryotic ribosomal protein eS24 family.

This is Small ribosomal subunit protein eS24 from Sulfolobus acidocaldarius (strain ATCC 33909 / DSM 639 / JCM 8929 / NBRC 15157 / NCIMB 11770).